A 202-amino-acid polypeptide reads, in one-letter code: MKNVLVLNASLQGENGNSSQLTSEFVTQLQQTESIKVEKVDLNTLNLPHLSAQEMQTWSMLSDNMTNDQAALAAYSNELLAQLERSDVIVVGMPMYNFTIPSTFKAWIDRVARAGRTFSYTSEGPKGHLQGKTVYIFAARGGIYQGTDNDTQTPYLKLVFGLMGITDVNFIYLEGLNMGEEYAQTSWQQARESLTTLLPATV.

FMN-binding positions include Ser-10 and 95-98 (MYNF).

The protein belongs to the azoreductase type 1 family. As to quaternary structure, homodimer. Requires FMN as cofactor.

It catalyses the reaction 2 a quinone + NADH + H(+) = 2 a 1,4-benzosemiquinone + NAD(+). It carries out the reaction N,N-dimethyl-1,4-phenylenediamine + anthranilate + 2 NAD(+) = 2-(4-dimethylaminophenyl)diazenylbenzoate + 2 NADH + 2 H(+). Its function is as follows. Quinone reductase that provides resistance to thiol-specific stress caused by electrophilic quinones. Also exhibits azoreductase activity. Catalyzes the reductive cleavage of the azo bond in aromatic azo compounds to the corresponding amines. The chain is FMN-dependent NADH:quinone oxidoreductase from Pseudoalteromonas atlantica (strain T6c / ATCC BAA-1087).